A 273-amino-acid polypeptide reads, in one-letter code: MERCVFYISDGTAITAEVLGHAVLSQFPINVTTFTLPFVENAARAQSVCKQINEIYQDTGVRPLVFYSIISLEVREIIQRSEGFCQDIVQALVAPLQGELGVPPQPVLNRTHGLTESNLDKYDARIAAIDYALAHDDGISLRNLDQAQVILLGVSRCGKTPTSLYLAMQFGIRAANYPFIADDMDNLQLPAALKPFQHKLFGLTINPERLAAIREERRENSRYASLRQCRMEVGEVEALFRKNQIRYLNSTNYSVEEISTKILDILGMSRRMF.

153 to 160 serves as a coordination point for ADP; it reads GVSRCGKT.

It belongs to the pyruvate, phosphate/water dikinase regulatory protein family. PSRP subfamily.

The catalysed reaction is [pyruvate, water dikinase] + ADP = [pyruvate, water dikinase]-phosphate + AMP + H(+). It carries out the reaction [pyruvate, water dikinase]-phosphate + phosphate + H(+) = [pyruvate, water dikinase] + diphosphate. Bifunctional serine/threonine kinase and phosphorylase involved in the regulation of the phosphoenolpyruvate synthase (PEPS) by catalyzing its phosphorylation/dephosphorylation. The sequence is that of Putative phosphoenolpyruvate synthase regulatory protein from Yersinia pseudotuberculosis serotype I (strain IP32953).